Here is a 427-residue protein sequence, read N- to C-terminus: Phosphoribosylamine--glycine ligase (427 aa).

The region spanning 107–312 is the ATP-grasp domain; the sequence is KDLCARFNIP…LLALVNAAVD (206 aa). ATP is bound at residue 133 to 193; the sequence is IRQQGAPIVV…EEFLDGEEAS (61 aa). Mg(2+)-binding residues include Glu282 and Asn284.

Belongs to the GARS family. Mg(2+) serves as cofactor. It depends on Mn(2+) as a cofactor.

The catalysed reaction is 5-phospho-beta-D-ribosylamine + glycine + ATP = N(1)-(5-phospho-beta-D-ribosyl)glycinamide + ADP + phosphate + H(+). It participates in purine metabolism; IMP biosynthesis via de novo pathway; N(1)-(5-phospho-D-ribosyl)glycinamide from 5-phospho-alpha-D-ribose 1-diphosphate: step 2/2. This is Phosphoribosylamine--glycine ligase from Brucella melitensis biotype 1 (strain ATCC 23456 / CCUG 17765 / NCTC 10094 / 16M).